We begin with the raw amino-acid sequence, 152 residues long: 6,7-dimethyl-8-ribityllumazine synthase (152 aa).

Residues F21, 55–57, and 79–81 contribute to the 5-amino-6-(D-ribitylamino)uracil site; these read AFE and CVI. 84-85 is a (2S)-2-hydroxy-3-oxobutyl phosphate binding site; that stretch reads AT. The active-site Proton donor is the H87. A 5-amino-6-(D-ribitylamino)uracil-binding site is contributed by F112. A (2S)-2-hydroxy-3-oxobutyl phosphate-binding site is contributed by R126.

It belongs to the DMRL synthase family. Forms an icosahedral capsid composed of 60 subunits, arranged as a dodecamer of pentamers.

The enzyme catalyses (2S)-2-hydroxy-3-oxobutyl phosphate + 5-amino-6-(D-ribitylamino)uracil = 6,7-dimethyl-8-(1-D-ribityl)lumazine + phosphate + 2 H2O + H(+). It functions in the pathway cofactor biosynthesis; riboflavin biosynthesis; riboflavin from 2-hydroxy-3-oxobutyl phosphate and 5-amino-6-(D-ribitylamino)uracil: step 1/2. Its function is as follows. Catalyzes the formation of 6,7-dimethyl-8-ribityllumazine by condensation of 5-amino-6-(D-ribitylamino)uracil with 3,4-dihydroxy-2-butanone 4-phosphate. This is the penultimate step in the biosynthesis of riboflavin. In Staphylococcus haemolyticus (strain JCSC1435), this protein is 6,7-dimethyl-8-ribityllumazine synthase.